A 290-amino-acid chain; its full sequence is Probable ATP-dependent kinase TDA10 (290 aa).

38–45 is an ATP binding site; that stretch reads GPQGSGKS.

It belongs to the GLYK kinase family.

The protein resides in the cytoplasm. The protein localises to the nucleus. ATP-dependent kinase whose specificity is not yet known. This is Probable ATP-dependent kinase TDA10 (TDA10) from Saccharomyces cerevisiae (strain ATCC 204508 / S288c) (Baker's yeast).